Reading from the N-terminus, the 144-residue chain is Large ribosomal subunit protein uL13 (144 aa).

Belongs to the universal ribosomal protein uL13 family. Part of the 50S ribosomal subunit.

Its function is as follows. This protein is one of the early assembly proteins of the 50S ribosomal subunit, although it is not seen to bind rRNA by itself. It is important during the early stages of 50S assembly. The polypeptide is Large ribosomal subunit protein uL13 (Pelotomaculum thermopropionicum (strain DSM 13744 / JCM 10971 / SI)).